Consider the following 127-residue polypeptide: Fluoride-specific ion channel FluC (127 aa).

A run of 4 helical transmembrane segments spans residues 4–24, 35–55, 71–91, and 103–123; these read LLLA…MLSM, LGTL…FAWF, TGFC…VFLL, and VLVN…IFSA. The Na(+) site is built by Gly-75 and Thr-78.

It belongs to the fluoride channel Fluc/FEX (TC 1.A.43) family.

The protein resides in the cell inner membrane. The enzyme catalyses fluoride(in) = fluoride(out). Na(+) is not transported, but it plays an essential structural role and its presence is essential for fluoride channel function. Functionally, fluoride-specific ion channel. Important for reducing fluoride concentration in the cell, thus reducing its toxicity. This is Fluoride-specific ion channel FluC from Escherichia fergusonii (strain ATCC 35469 / DSM 13698 / CCUG 18766 / IAM 14443 / JCM 21226 / LMG 7866 / NBRC 102419 / NCTC 12128 / CDC 0568-73).